Consider the following 252-residue polypeptide: Ubiquinone biosynthesis O-methyltransferase (252 aa).

S-adenosyl-L-methionine is bound by residues R51, G70, D91, and M136.

Belongs to the methyltransferase superfamily. UbiG/COQ3 family.

It catalyses the reaction a 3-demethylubiquinol + S-adenosyl-L-methionine = a ubiquinol + S-adenosyl-L-homocysteine + H(+). The catalysed reaction is a 3-(all-trans-polyprenyl)benzene-1,2-diol + S-adenosyl-L-methionine = a 2-methoxy-6-(all-trans-polyprenyl)phenol + S-adenosyl-L-homocysteine + H(+). The protein operates within cofactor biosynthesis; ubiquinone biosynthesis. Functionally, O-methyltransferase that catalyzes the 2 O-methylation steps in the ubiquinone biosynthetic pathway. The protein is Ubiquinone biosynthesis O-methyltransferase of Albidiferax ferrireducens (strain ATCC BAA-621 / DSM 15236 / T118) (Rhodoferax ferrireducens).